Reading from the N-terminus, the 361-residue chain is DNA replication and repair protein RecF (361 aa).

30–37 lines the ATP pocket; that stretch reads GQNAQGKT.

Belongs to the RecF family.

The protein resides in the cytoplasm. Functionally, the RecF protein is involved in DNA metabolism; it is required for DNA replication and normal SOS inducibility. RecF binds preferentially to single-stranded, linear DNA. It also seems to bind ATP. The polypeptide is DNA replication and repair protein RecF (Streptococcus gordonii (strain Challis / ATCC 35105 / BCRC 15272 / CH1 / DL1 / V288)).